The sequence spans 205 residues: High frequency lysogenization protein HflD homolog (205 aa).

This sequence belongs to the HflD family.

The protein localises to the cytoplasm. It is found in the cell inner membrane. The protein is High frequency lysogenization protein HflD homolog of Aliivibrio fischeri (strain ATCC 700601 / ES114) (Vibrio fischeri).